The chain runs to 193 residues: ATP-dependent Clp protease proteolytic subunit (193 aa).

The active-site Nucleophile is Ser-98. His-123 is a catalytic residue.

This sequence belongs to the peptidase S14 family. As to quaternary structure, fourteen ClpP subunits assemble into 2 heptameric rings which stack back to back to give a disk-like structure with a central cavity, resembling the structure of eukaryotic proteasomes.

The protein localises to the cytoplasm. It catalyses the reaction Hydrolysis of proteins to small peptides in the presence of ATP and magnesium. alpha-casein is the usual test substrate. In the absence of ATP, only oligopeptides shorter than five residues are hydrolyzed (such as succinyl-Leu-Tyr-|-NHMec, and Leu-Tyr-Leu-|-Tyr-Trp, in which cleavage of the -Tyr-|-Leu- and -Tyr-|-Trp bonds also occurs).. In terms of biological role, cleaves peptides in various proteins in a process that requires ATP hydrolysis. Has a chymotrypsin-like activity. Plays a major role in the degradation of misfolded proteins. In Pasteurella multocida (strain Pm70), this protein is ATP-dependent Clp protease proteolytic subunit.